The sequence spans 374 residues: Alanine racemase (374 aa).

Lys-40 (proton acceptor; specific for D-alanine) is an active-site residue. Lys-40 carries the post-translational modification N6-(pyridoxal phosphate)lysine. Arg-139 is a binding site for substrate. Tyr-261 functions as the Proton acceptor; specific for L-alanine in the catalytic mechanism. Position 309 (Met-309) interacts with substrate.

It belongs to the alanine racemase family. Pyridoxal 5'-phosphate serves as cofactor.

It carries out the reaction L-alanine = D-alanine. It functions in the pathway amino-acid biosynthesis; D-alanine biosynthesis; D-alanine from L-alanine: step 1/1. Its function is as follows. Catalyzes the interconversion of L-alanine and D-alanine. May also act on other amino acids. The polypeptide is Alanine racemase (alr) (Rhodospirillum rubrum (strain ATCC 11170 / ATH 1.1.1 / DSM 467 / LMG 4362 / NCIMB 8255 / S1)).